Here is a 93-residue protein sequence, read N- to C-terminus: Small ribosomal subunit protein bS18 (93 aa).

Positions 1–11 (MAPSARNRKPG) are enriched in basic residues. A disordered region spans residues 1 to 27 (MAPSARNRKPGARSMAKAAALRKPKKK).

Belongs to the bacterial ribosomal protein bS18 family. In terms of assembly, part of the 30S ribosomal subunit. Forms a tight heterodimer with protein bS6.

Functionally, binds as a heterodimer with protein bS6 to the central domain of the 16S rRNA, where it helps stabilize the platform of the 30S subunit. The sequence is that of Small ribosomal subunit protein bS18 from Salinispora tropica (strain ATCC BAA-916 / DSM 44818 / JCM 13857 / NBRC 105044 / CNB-440).